Reading from the N-terminus, the 372-residue chain is Phenylalanine--tRNA ligase alpha subunit (372 aa).

Glu-276 provides a ligand contact to Mg(2+).

The protein belongs to the class-II aminoacyl-tRNA synthetase family. Phe-tRNA synthetase alpha subunit type 1 subfamily. In terms of assembly, tetramer of two alpha and two beta subunits. Requires Mg(2+) as cofactor.

It is found in the cytoplasm. The catalysed reaction is tRNA(Phe) + L-phenylalanine + ATP = L-phenylalanyl-tRNA(Phe) + AMP + diphosphate + H(+). The sequence is that of Phenylalanine--tRNA ligase alpha subunit from Thermobifida fusca (strain YX).